The following is a 160-amino-acid chain: MPLYEHVFLARQDASTQQVEELTTQITGVIEGLGGKVTKTEAWGLRSLTYRMNKNRKAHFVMLNIDGPSAVVAEVERQERINEDIIRYLTVRVEEHEEGPSAMMRKADRDRERDDRGGREGGGFRGDREGRGDREGGGFRGDRGPRRPREDADTAAASEE.

Basic and acidic residues-rich tracts occupy residues 94–119 (EEHE…RGGR) and 125–152 (RGDR…REDA). The tract at residues 94-160 (EEHEEGPSAM…DADTAAASEE (67 aa)) is disordered.

The protein belongs to the bacterial ribosomal protein bS6 family.

Functionally, binds together with bS18 to 16S ribosomal RNA. This is Small ribosomal subunit protein bS6 from Rhodopseudomonas palustris (strain BisB5).